The following is a 37-amino-acid chain: L-amino-acid oxidase (37 aa).

Belongs to the flavin monoamine oxidase family. FIG1 subfamily. Homodimer; non-covalently linked. It depends on FAD as a cofactor. N-Glycosylated. In terms of tissue distribution, expressed by the venom gland.

Its subcellular location is the secreted. It carries out the reaction an L-alpha-amino acid + O2 + H2O = a 2-oxocarboxylate + H2O2 + NH4(+). It catalyses the reaction L-leucine + O2 + H2O = 4-methyl-2-oxopentanoate + H2O2 + NH4(+). The catalysed reaction is L-phenylalanine + O2 + H2O = 3-phenylpyruvate + H2O2 + NH4(+). The enzyme catalyses L-tryptophan + O2 + H2O = indole-3-pyruvate + H2O2 + NH4(+). It carries out the reaction L-methionine + O2 + H2O = 4-methylsulfanyl-2-oxobutanoate + H2O2 + NH4(+). It catalyses the reaction L-isoleucine + O2 + H2O = (S)-3-methyl-2-oxopentanoate + H2O2 + NH4(+). The catalysed reaction is L-arginine + O2 + H2O = 5-guanidino-2-oxopentanoate + H2O2 + NH4(+). The enzyme catalyses L-histidine + O2 + H2O = 3-(imidazol-5-yl)pyruvate + H2O2 + NH4(+). It carries out the reaction L-valine + O2 + H2O = 3-methyl-2-oxobutanoate + H2O2 + NH4(+). Catalyzes an oxidative deamination of predominantly hydrophobic and aromatic L-amino acids, thus producing hydrogen peroxide that may contribute to the diverse toxic effects of this enzyme. Is highly active on L-Leu, L-Met, moderately active on L-Arg, L-Trp, L-Phe, L-Val, L-His, and L-Ile, and is weakly or not active on L-Cys, L-Lys, L-Ala, L-Thr, L-Asp, L-Ser, and L-Pro. Exhibits diverse biological activities, such as hemorrhage, edema, apoptosis of vascular endothelial cells or tumor cell lines, as well as regulation of platelet aggregation. Effects of snake L-amino oxidases on platelets are controversial, since they either induce aggregation or inhibit agonist-induced aggregation. These different effects are probably due to different experimental conditions. This protein induce hemolysis and has antibacterial and antiparasitic activities (against the Gram-positive S.aureus). Tested in vivo, this protein significantly inhibits Ehrlich ascite tumors growth and induces an influx of polymorphonuclear cells, as well as spontaneous liberation of hydrogen peroxide from peritoneal macrophages. The protein is L-amino-acid oxidase of Bothrops jararaca (Jararaca).